The sequence spans 379 residues: GDSL esterase/lipase EXL2 (379 aa).

Residues 1-35 (MKRNSINIHHVTSFSSSPFWCVFFLVLLCKTSTNA) form the signal peptide. N-linked (GlcNAc...) asparagine glycosylation is present at Asn42. Residue Ser54 is the Nucleophile of the active site. Residues Asp358 and His361 contribute to the active site.

Belongs to the 'GDSL' lipolytic enzyme family.

The protein resides in the secreted. The protein is GDSL esterase/lipase EXL2 (EXL2) of Arabidopsis thaliana (Mouse-ear cress).